A 269-amino-acid chain; its full sequence is 3-methyl-2-oxobutanoate hydroxymethyltransferase (269 aa).

The Mg(2+) site is built by Asp-50 and Asp-89. Residues 50–51, Asp-89, and Lys-118 each bind 3-methyl-2-oxobutanoate; that span reads DS. Mg(2+) is bound at residue Glu-120. Glu-187 (proton acceptor) is an active-site residue.

This sequence belongs to the PanB family. As to quaternary structure, homodecamer; pentamer of dimers. Mg(2+) is required as a cofactor.

The protein localises to the cytoplasm. The enzyme catalyses 3-methyl-2-oxobutanoate + (6R)-5,10-methylene-5,6,7,8-tetrahydrofolate + H2O = 2-dehydropantoate + (6S)-5,6,7,8-tetrahydrofolate. It functions in the pathway cofactor biosynthesis; (R)-pantothenate biosynthesis; (R)-pantoate from 3-methyl-2-oxobutanoate: step 1/2. Catalyzes the reversible reaction in which hydroxymethyl group from 5,10-methylenetetrahydrofolate is transferred onto alpha-ketoisovalerate to form ketopantoate. The polypeptide is 3-methyl-2-oxobutanoate hydroxymethyltransferase (Nitrosomonas eutropha (strain DSM 101675 / C91 / Nm57)).